Here is a 286-residue protein sequence, read N- to C-terminus: Apoptosis inhibitor 1 (286 aa).

2 BIR repeats span residues 29-96 and 131-199; these read LIER…CAYA and LQSR…CYFV. Cysteine 169, cysteine 172, histidine 189, and cysteine 196 together coordinate Zn(2+). The RING-type zinc-finger motif lies at 238 to 274; that stretch reads CKVCLERQRDAVLMPCRHFCVCVQCYFGLDQKCPTCR.

Acts by blocking cellular apoptosis early in infection. Later, stimulates caspase-3-like protease activity and induces apoptosis, probably to favor the release of occluded virions. The polypeptide is Apoptosis inhibitor 1 (IAP1) (Lepidoptera (butterflies and moths)).